The primary structure comprises 596 residues: Delta(24(24(1)))-sterol reductase (596 aa).

Positions 1-122 (MSSRYSLRQT…GHATNGHATS (122 aa)) are disordered. A compositionally biased stretch (gly residues) spans 98-112 (NGNGNGYTNGHGNGN). A run of 8 helical transmembrane segments spans residues 168-188 (FGTAAMMTLFPVLMWYMWIGA), 225-245 (VWAWYWSYLIVEGAFYCLLPG), 269-289 (WSLYTTLACLAGLHYSGIWPL), 296-316 (FGPLLSVAILSGFLVSIVAYF), 353-373 (MFFEVRMPWYILLILSLGTAA), 381-401 (YVSGEVWFLVMAHFLYANACA), 419-439 (GFMLIFWNLAGVPLSYCHCTI), and 454-474 (GILAAMFVGYLFWYWVWDSCN). Residues Lys477, Arg481, Leu516, and 528 to 529 (HY) each bind NADP(+). A helical membrane pass occupies residues 535–557 (FAVSWGLITGFESPFPWFYPVFF). NADP(+) contacts are provided by residues Asp568, 572–576 (CRRKY), and Tyr583.

The protein belongs to the ERG4/ERG24 family.

Its subcellular location is the endoplasmic reticulum membrane. The catalysed reaction is ergosterol + NADP(+) = ergosta-5,7,22,24(28)-tetraen-3beta-ol + NADPH + H(+). The protein operates within steroid metabolism; ergosterol biosynthesis. Its function is as follows. Delta(24(24(1)))-sterol reductase; part of the third module of ergosterol biosynthesis pathway that includes the late steps of the pathway. ERG4 catalyzes the last step of ergosterol biosynthesis by converting ergosta-5,7,22,24(28)-tetraen-3beta-ol into ergosterol. The third module or late pathway involves the ergosterol synthesis itself through consecutive reactions that mainly occur in the endoplasmic reticulum (ER) membrane. Firstly, the squalene synthase ERG9 catalyzes the condensation of 2 farnesyl pyrophosphate moieties to form squalene, which is the precursor of all steroids. Squalene synthase is crucial for balancing the incorporation of farnesyl diphosphate (FPP) into sterol and nonsterol isoprene synthesis. Secondly, squalene is converted into lanosterol by the consecutive action of the squalene epoxidase ERG1 and the lanosterol synthase ERG7. Then, the delta(24)-sterol C-methyltransferase ERG6 methylates lanosterol at C-24 to produce eburicol. Eburicol is the substrate of the sterol 14-alpha demethylase encoded by CYP51A, CYP51B and CYP51C, to yield 4,4,24-trimethyl ergosta-8,14,24(28)-trienol. CYP51B encodes the enzyme primarily responsible for sterol 14-alpha-demethylation, and plays an essential role in ascospore formation. CYP51A encodes an additional sterol 14-alpha-demethylase, induced on ergosterol depletion and responsible for the intrinsic variation in azole sensitivity. The third CYP51 isoform, CYP51C, does not encode a sterol 14-alpha-demethylase, but is required for full virulence on host wheat ears. The C-14 reductase ERG24 then reduces the C14=C15 double bond which leads to 4,4-dimethylfecosterol. A sequence of further demethylations at C-4, involving the C-4 demethylation complex containing the C-4 methylsterol oxidases ERG25, the sterol-4-alpha-carboxylate 3-dehydrogenase ERG26 and the 3-keto-steroid reductase ERG27, leads to the production of fecosterol via 4-methylfecosterol. ERG28 has a role as a scaffold to help anchor ERG25, ERG26 and ERG27 to the endoplasmic reticulum. The C-8 sterol isomerase ERG2 then catalyzes the reaction which results in unsaturation at C-7 in the B ring of sterols and thus converts fecosterol to episterol. The sterol-C5-desaturases ERG3A and ERG3BB then catalyze the introduction of a C-5 double bond in the B ring to produce 5-dehydroepisterol. The C-22 sterol desaturases ERG5A and ERG5B further convert 5-dehydroepisterol into ergosta-5,7,22,24(28)-tetraen-3beta-ol by forming the C-22(23) double bond in the sterol side chain. Finally, ergosta-5,7,22,24(28)-tetraen-3beta-ol is substrate of the C-24(28) sterol reductase ERG4 to produce ergosterol. The sequence is that of Delta(24(24(1)))-sterol reductase from Gibberella zeae (strain ATCC MYA-4620 / CBS 123657 / FGSC 9075 / NRRL 31084 / PH-1) (Wheat head blight fungus).